A 137-amino-acid chain; its full sequence is Nucleoside diphosphate kinase (137 aa).

Residues K9, F57, R85, T91, R102, and N112 each contribute to the ATP site. The active-site Pros-phosphohistidine intermediate is the H115.

This sequence belongs to the NDK family. As to quaternary structure, homotetramer. Mg(2+) is required as a cofactor.

It localises to the cytoplasm. It carries out the reaction a 2'-deoxyribonucleoside 5'-diphosphate + ATP = a 2'-deoxyribonucleoside 5'-triphosphate + ADP. It catalyses the reaction a ribonucleoside 5'-diphosphate + ATP = a ribonucleoside 5'-triphosphate + ADP. Its function is as follows. Major role in the synthesis of nucleoside triphosphates other than ATP. The ATP gamma phosphate is transferred to the NDP beta phosphate via a ping-pong mechanism, using a phosphorylated active-site intermediate. This chain is Nucleoside diphosphate kinase, found in Campylobacter jejuni subsp. jejuni serotype O:6 (strain 81116 / NCTC 11828).